A 281-amino-acid polypeptide reads, in one-letter code: E2F-associated phosphoprotein (281 aa).

At Met1 the chain carries N-acetylmethionine. The interval 1–27 (MNRLQDDYDPYAVEEPSDEEPALSSSE) is disordered. A compositionally biased stretch (acidic residues) spans 15 to 27 (EPSDEEPALSSSE). The residue at position 17 (Ser17) is a Phosphoserine. A Phosphothreonine modification is found at Thr37. Phosphoserine occurs at positions 109 and 111. The disordered stretch occupies residues 222–245 (PENRRKRRSAKKMRSNPEDPAERE). Basic residues predominate over residues 225–235 (RRKRRSAKKMR). A compositionally biased stretch (basic and acidic residues) spans 236 to 245 (SNPEDPAERE).

In terms of assembly, interacts with E2F1. The C-terminal half binds the N-terminal of E2F1. Also interacts with E2F2 and E2F3, but not E2F4.

Its subcellular location is the cytoplasm. The protein localises to the nucleus. May play an important role in the fine-tuning of both major E2F1 activities, the regulation of the cell-cycle and the induction of apoptosis. Promotes S-phase entry, and inhibits p14(ARP) expression. The polypeptide is E2F-associated phosphoprotein (Eapp) (Mus musculus (Mouse)).